The chain runs to 191 residues: Outer membrane lipoprotein DolP (191 aa).

A signal peptide spans 1–18 (MKALSPIAVLISALLLQG). Cys19 is lipidated: N-palmitoyl cysteine. Cys19 carries S-diacylglycerol cysteine lipidation. BON domains follow at residues 46–115 (DDGT…RQGQ) and 124–191 (NDTW…TFIK).

It belongs to the lipoprotein DolP family.

It is found in the cell outer membrane. Functionally, plays an important role in maintaining outer membrane integrity. This is Outer membrane lipoprotein DolP from Escherichia coli O157:H7.